A 307-amino-acid polypeptide reads, in one-letter code: UPF0276 protein HI_1600 (307 aa).

This sequence belongs to the UPF0276 family.

This is UPF0276 protein HI_1600 from Haemophilus influenzae (strain ATCC 51907 / DSM 11121 / KW20 / Rd).